A 215-amino-acid chain; its full sequence is HTH-type transcriptional repressor FabR (215 aa).

The HTH tetR-type domain occupies 10–70 (KTRRSLVEAA…TMVDESGLML (61 aa)). The H-T-H motif DNA-binding region spans 33 to 52 (SLREVAREAGIAPTSFYRHF).

In terms of assembly, homodimer.

Its subcellular location is the cytoplasm. Represses the transcription of fabB, involved in unsaturated fatty acid (UFA) biosynthesis. By controlling UFA production, FabR directly influences the physical properties of the membrane bilayer. In Escherichia coli O9:H4 (strain HS), this protein is HTH-type transcriptional repressor FabR.